A 20-amino-acid chain; its full sequence is MINGWTGNILRINLTTGAIS.

The protein belongs to the AOR/FOR family. As to quaternary structure, forms various types of homooligomers. It depends on [4Fe-4S] cluster as a cofactor. Requires Mo-molybdopterin as cofactor.

It is found in the cell membrane. The enzyme catalyses a (2R)-2-hydroxycarboxylate + A = a 2-oxocarboxylate + AH2. Is inhibited by cyanide. Is sensitive to oxygen. Functionally, oxidoreductase with an extremely broad substrate specificity that can reduce reversibly 2-oxocarboxylates to (2R)-hydroxycarboxylates. In Proteus hauseri, this protein is 2-oxo-acid reductase.